Consider the following 320-residue polypeptide: MPQPMSPPAIFLMGPTASGKTDLAVELVRRLPCEIISVDSALVYRGMDIGTAKPGPEILAEAPHRLIDILDPAEAYSAARFREDALAAMAEIAAAGRVPLLVGGTMLYFRALEFGLDRLPEADPEVRAQIEAEAAASGWEAIHARLAAVDPPSAARIHPNDPQRLQRALEVYLLTGRPLSAFHGGADASTLPYRLLRLALIPADRAALRERIARRFDQMLELGLIHEVETLYRREDLNPSLPAIRAVGYRQAWAYLAGEMDFETMRSKAIIATGQLAKRQLTWLRSYPGIEVLEMEQLDPAAVVARVRAHLEAARAGAGP.

14–21 (GPTASGKT) is a binding site for ATP. 16–21 (TASGKT) is a binding site for substrate. Interaction with substrate tRNA regions lie at residues 39 to 42 (DSAL) and 163 to 167 (QRLQR).

The protein belongs to the IPP transferase family. In terms of assembly, monomer. Mg(2+) is required as a cofactor.

The enzyme catalyses adenosine(37) in tRNA + dimethylallyl diphosphate = N(6)-dimethylallyladenosine(37) in tRNA + diphosphate. Catalyzes the transfer of a dimethylallyl group onto the adenine at position 37 in tRNAs that read codons beginning with uridine, leading to the formation of N6-(dimethylallyl)adenosine (i(6)A). This Thioalkalivibrio sulfidiphilus (strain HL-EbGR7) protein is tRNA dimethylallyltransferase.